The primary structure comprises 479 residues: mRNA export factor ICP27 homolog (479 aa).

Residues 1–15 (MVPSQRLSRTSSISS) are compositionally biased toward low complexity. Disordered stretches follow at residues 1 to 77 (MVPS…PSSV) and 91 to 210 (KKWD…NKPW). Residues 35 to 44 (TDCDLDPMEG) are compositionally biased toward acidic residues. The tract at residues 61 to 146 (DEDPTPAHAI…TDESYGKRRH (86 aa)) is nuclear export signal and interaction with host NXF1. A nuclear localization signal region spans residues 127–130 (KRRR). A compositionally biased stretch (basic and acidic residues) spans 132–142 (EVHGCTDESYG). A nuclear localization signal region spans residues 143-145 (KRR). Residues C354, H445, C449, and C454 each contribute to the Zn(2+) site. The CHC2-type zinc finger occupies 354 to 454 (CFLPNTRDYN…HTRDCRSASC (101 aa)).

Belongs to the HHV-1 ICP27 protein family. Interacts with host XPO1 and with the XPO1 export pathway components small GTPase RAN and nucleoporin NUP214. Interacts with host SPEN, OTT1 and OTT3. Interacts with host SRSF1, SRSF3, SRSF7 and SRPK1. Interacts with host DHX9; this interaction may have an inhibitory effect on virion production. Interacts (via N-terminus) with host NXF1; this interaction plays a role in mRNA export. Post-translationally, phosphorylated by cellular protein kinase CK2.

Its subcellular location is the host nucleus. The protein localises to the host cytoplasm. Functionally, promotes the nuclear export of a subset of early and late viral mRNAs by interacting with mRNAs and cellular export proteins. Additionally may prevent the establishment of cellular antiviral state, by acting as an alternative splicing factor for cellular RNAs such as STAT1, resulting in a STAT1 mRNA incapable of producing the STAT1alpha isoform. This chain is mRNA export factor ICP27 homolog, found in Homo sapiens (Human).